A 379-amino-acid chain; its full sequence is Glutamate 5-kinase (379 aa).

Residue K19 participates in ATP binding. Substrate is bound by residues S59, D146, and N158. Residues 178 to 179 (TD) and 220 to 226 (TGGMATK) contribute to the ATP site. Positions 285–363 (SGDIIIDDGA…KDIISILGHD (79 aa)) constitute a PUA domain.

It belongs to the glutamate 5-kinase family.

Its subcellular location is the cytoplasm. It catalyses the reaction L-glutamate + ATP = L-glutamyl 5-phosphate + ADP. It functions in the pathway amino-acid biosynthesis; L-proline biosynthesis; L-glutamate 5-semialdehyde from L-glutamate: step 1/2. Its function is as follows. Catalyzes the transfer of a phosphate group to glutamate to form L-glutamate 5-phosphate. The protein is Glutamate 5-kinase of Vibrio campbellii (strain ATCC BAA-1116).